A 372-amino-acid polypeptide reads, in one-letter code: Transaldolase (372 aa).

K140 (schiff-base intermediate with substrate) is an active-site residue.

It belongs to the transaldolase family. Type 2 subfamily.

The protein resides in the cytoplasm. It catalyses the reaction D-sedoheptulose 7-phosphate + D-glyceraldehyde 3-phosphate = D-erythrose 4-phosphate + beta-D-fructose 6-phosphate. It functions in the pathway carbohydrate degradation; pentose phosphate pathway; D-glyceraldehyde 3-phosphate and beta-D-fructose 6-phosphate from D-ribose 5-phosphate and D-xylulose 5-phosphate (non-oxidative stage): step 2/3. Its function is as follows. Transaldolase is important for the balance of metabolites in the pentose-phosphate pathway. This chain is Transaldolase, found in Acidothermus cellulolyticus (strain ATCC 43068 / DSM 8971 / 11B).